The chain runs to 226 residues: Clarin-3 (226 aa).

The chain crosses the membrane as a helical span at residues 8 to 28 (LMFLSGFLTSLGSVVVICSIL). Asn46 carries an N-linked (GlcNAc...) asparagine glycan. 3 consecutive transmembrane segments (helical) span residues 92 to 112 (VVIL…VFTF), 128 to 148 (GVYT…VLFV), and 181 to 201 (FWLT…IIFY).

This sequence belongs to the clarin family.

The protein resides in the membrane. This is Clarin-3 (Clrn3) from Mus musculus (Mouse).